The chain runs to 124 residues: Large ribosomal subunit protein uL22 (124 aa).

This sequence belongs to the universal ribosomal protein uL22 family. Part of the 50S ribosomal subunit.

This protein binds specifically to 23S rRNA; its binding is stimulated by other ribosomal proteins, e.g. L4, L17, and L20. It is important during the early stages of 50S assembly. It makes multiple contacts with different domains of the 23S rRNA in the assembled 50S subunit and ribosome. In terms of biological role, the globular domain of the protein is located near the polypeptide exit tunnel on the outside of the subunit, while an extended beta-hairpin is found that lines the wall of the exit tunnel in the center of the 70S ribosome. This chain is Large ribosomal subunit protein uL22, found in Synechococcus sp. (strain JA-2-3B'a(2-13)) (Cyanobacteria bacterium Yellowstone B-Prime).